The chain runs to 430 residues: Pyrroloquinoline quinone-dependent sugar dehydrogenase (430 aa).

The N-terminal stretch at 1–23 (MARLAPHTLLLALFVFLFGSCTA) is a signal peptide. N-linked (GlcNAc...) asparagine glycosylation is present at N25. Position 57 (R57) interacts with pyrroloquinoline quinone. 2 N-linked (GlcNAc...) asparagine glycosylation sites follow: N94 and N147. H153 contacts pyrroloquinoline quinone. N-linked (GlcNAc...) asparagine glycosylation occurs at N184. R220 contacts pyrroloquinoline quinone. 2 residues coordinate Ca(2+): S240 and D242. C281 and C316 are oxidised to a cystine. N306 carries an N-linked (GlcNAc...) asparagine glycan. H330 lines the pyrroloquinoline quinone pocket. A glycan (N-linked (GlcNAc...) asparagine) is linked at N341. H350 contributes to the pyrroloquinoline quinone binding site. C388 and C392 are joined by a disulfide.

Belongs to the sugar dehydrogenase AA12 family. Ca(2+) serves as cofactor. The cofactor is pyrroloquinoline quinone.

The protein resides in the secreted. Its function is as follows. Pyrroloquinoline quinone (PPQ)-dependent oxidoreductase that catalyzes the oxidation of various sugars such as L-fucose. This is Pyrroloquinoline quinone-dependent sugar dehydrogenase from Hypocrea jecorina (strain QM6a) (Trichoderma reesei).